Here is a 641-residue protein sequence, read N- to C-terminus: WW domain-binding protein 11 (641 aa).

Residues Met-1–Ser-11 are compositionally biased toward polar residues. The tract at residues Met-1–Arg-37 is disordered. Residues Met-1–Leu-45 are required for nuclear import. At Lys-13 the chain carries N6-acetyllysine. The span at Arg-28–Arg-37 shows a compositional bias: basic residues. Positions Glu-75 to His-133 form a coiled coil. A Phosphoserine modification is found at Ser-181. Residues Leu-186–Gln-213 are disordered. Arg-192 bears the Omega-N-methylarginine mark. The segment covering Arg-192–Gln-210 has biased composition (pro residues). The interval Arg-217–Phe-221 is interaction with PP1. Phosphotyrosine is present on Tyr-236. A disordered region spans residues Tyr-236–Ala-549. Phosphoserine is present on Ser-237. Residues Ser-253–Asp-263 show a composition bias toward acidic residues. Over residues Thr-276–Ser-304 the composition is skewed to basic and acidic residues. A phosphoserine mark is found at Ser-279 and Ser-283. The tract at residues Leu-306–Phe-310 is interaction with PP1. The segment covering Glu-351–Glu-365 has biased composition (acidic residues). A phosphoserine mark is found at Ser-353, Ser-361, and Ser-364. The segment covering Ala-366 to Ala-380 has biased composition (basic and acidic residues). Positions Asp-381–Ala-404 are enriched in low complexity. Pro residues-rich tracts occupy residues Pro-405–Met-447, Arg-456–Pro-504, and Pro-510–Asn-530. The short motif at Pro-455 to Arg-466 is the PGR element. Residue Lys-557 forms a Glycyl lysine isopeptide (Lys-Gly) (interchain with G-Cter in SUMO2) linkage. Lys-565 is modified (N6-acetyllysine). Lys-572 participates in a covalent cross-link: Glycyl lysine isopeptide (Lys-Gly) (interchain with G-Cter in SUMO2). The segment at Glu-588–Val-623 is disordered. A Phosphoserine modification is found at Ser-600.

As to quaternary structure, interacts with PPP1CA, PPP1CB and PPP1CC. Interacts via the PGR motif with PQBP1 in the nucleus. Interacts with the WW domains of WBP4.

It localises to the nucleus. It is found in the cytoplasm. Functionally, activates pre-mRNA splicing. May inhibit PP1 phosphatase activity. This Rattus norvegicus (Rat) protein is WW domain-binding protein 11 (Wbp11).